The sequence spans 317 residues: Probable transcription factor At5g61620 (317 aa).

Residues 12–25 (CSHCGHNGHNARTC) form a CCHC-type zinc finger. Positions 77–111 (DPIAAVDDTGYHSDGQIHSKKGKTAHEKKKGKPWT) are disordered. Basic residues predominate over residues 94-108 (HSKKGKTAHEKKKGK). The HTH myb-type domain maps to 102 to 158 (HEKKKGKPWTEEEHRNFLIGLNKLGKGDWRGIAKSFVSTRTPTQVASHAQKYFIRLN). A DNA-binding region (H-T-H motif) is located at residues 130–154 (WRGIAKSFVSTRTPTQVASHAQKYF). The interval 173–206 (SLEDQKEKERNSQDASTKTPPKQPITGIQQPVVQ) is disordered. Basic and acidic residues predominate over residues 175 to 184 (EDQKEKERNS). Residues 185–206 (QDASTKTPPKQPITGIQQPVVQ) are compositionally biased toward polar residues.

Its subcellular location is the nucleus. Functionally, probable transcription factor involved in somatic embryogenesis. Acts as a positive regulator of BHLH109. The polypeptide is Probable transcription factor At5g61620 (Arabidopsis thaliana (Mouse-ear cress)).